A 182-amino-acid polypeptide reads, in one-letter code: MFKWYVVQVFTAQEKKVKKSLEDFKEASGMSDFIQQIILPSENVMEVKKGEHKIVEKYIWPGYLLVKMHLTDESWSYVKKTQGVVEFLGGGAPVALSEEEVKNILADLEEKKSGVVQKHKFEVGSQVKINDGVFVNFVGVVSEVFHDKGRLSVMVSIFGRETRVDDLEFWQVEEVAPGQESE.

Belongs to the NusG family.

Functionally, participates in transcription elongation, termination and antitermination. This Chlamydia muridarum (strain MoPn / Nigg) protein is Transcription termination/antitermination protein NusG.